A 505-amino-acid polypeptide reads, in one-letter code: Peroxisome proliferator-activated receptor gamma (505 aa).

O-linked (GlcNAc) threonine glycosylation occurs at Thr-84. At Ser-112 the chain carries Phosphoserine; by MAPK. A DNA-binding region (nuclear receptor) is located at residues 136-210; it reads AIECRVCGDK…VGMSHNAIRF (75 aa). NR C4-type zinc fingers lie at residues 139-159 and 176-198; these read CRVC…CEGC and CDLN…FQKC. The tract at residues 205–280 is interaction with FAM120B; it reads HNAIRFGRMP…DKSPFVIYDM (76 aa). Residues 238–503 form the NR LBD domain; that stretch reads DLRALAKHLY…HPLLQEIYKD (266 aa). Lys-252 is covalently cross-linked (Glycyl lysine isopeptide (Lys-Gly) (interchain with G-Cter in ubiquitin)). The short motif at 495 to 503 is the 9aaTAD element; the sequence is PLLQEIYKD.

This sequence belongs to the nuclear hormone receptor family. NR1 subfamily. As to quaternary structure, interacts with FOXO1 (acetylated form). Heterodimer with other nuclear receptors, such as RXRA. The heterodimer with the retinoic acid receptor RXRA is called adipocyte-specific transcription factor ARF6. Interacts with NCOA6 coactivator, leading to a strong increase in transcription of target genes. Interacts with coactivator PPARBP, leading to a mild increase in transcription of target genes. Interacts with NOCA7 in a ligand-inducible manner. Interacts with NCOA1 and NCOA2 LXXLL motifs. Interacts with ASXL1, ASXL2, DNTTIP2, FAM120B, MAP2K1/MEK1, NR0B2, PDPK1, PRDM16, PRMT2 and TGFB1I1. Interacts (when activated by agonist) with PPP5C. Interacts with HELZ2 and THRAP3; the interaction stimulates the transcriptional activity of PPARG. Interacts with PER2, the interaction is ligand dependent and blocks PPARG recruitment to target promoters. Interacts with NOCT. Interacts with ACTN4. Interacts (when in the liganded conformation) with GPS2. Interacts with CRY1 and CRY2 in a ligand-dependent manner. In the absence of hormonal ligand, interacts with TACC1. In macrophages, interacts with PAQR3 and STUB1; the interactions promote PPARG poylubiquitination and STUB1-mediated degradation. In terms of processing, O-GlcNAcylation at Thr-84 reduces transcriptional activity in adipocytes. Phosphorylated at basal conditions and dephosphorylated when treated with the ligand. May be dephosphorylated by PPP5C. The phosphorylated form may be inactive and dephosphorylation induces adipogenic activity. Post-translationally, ubiquitinated by E3 ubiquitin-protein ligase complex containing FBXO9; leading to proteasomal degradation. Ubiquitinated at Lys-252 by TRIM55 leading to proteasomal degradation. Ubiquitinated by E3 ubiquitin-protein ligase STUB1/CHIP; leading to proteasomal degradation. Highest expression in adipose tissue. Lower in liver, heart, kidney, stomach, duodenum and colon.

It localises to the nucleus. It is found in the cytoplasm. Its activity is regulated as follows. PDPK1 activates its transcriptional activity independently of its kinase activity. In terms of biological role, nuclear receptor that binds peroxisome proliferators such as hypolipidemic drugs and fatty acids. Once activated by a ligand, the nuclear receptor binds to DNA specific PPAR response elements (PPRE) and modulates the transcription of its target genes, such as acyl-CoA oxidase. It therefore controls the peroxisomal beta-oxidation pathway of fatty acids. Key regulator of adipocyte differentiation and glucose homeostasis. ARF6 acts as a key regulator of the tissue-specific adipocyte P2 (aP2) enhancer. Acts as a critical regulator of gut homeostasis by suppressing NF-kappa-B-mediated pro-inflammatory responses. Plays a role in the regulation of cardiovascular circadian rhythms by regulating the transcription of BMAL1 in the blood vessels. The sequence is that of Peroxisome proliferator-activated receptor gamma (PPARG) from Macaca mulatta (Rhesus macaque).